Here is a 154-residue protein sequence, read N- to C-terminus: UPF0225 protein YE2246 (154 aa).

Belongs to the UPF0225 family.

This Yersinia enterocolitica serotype O:8 / biotype 1B (strain NCTC 13174 / 8081) protein is UPF0225 protein YE2246.